The chain runs to 148 residues: Small ribosomal subunit protein uS9 (148 aa).

The protein belongs to the universal ribosomal protein uS9 family.

The protein is Small ribosomal subunit protein uS9 (RpS16) of Aedes aegypti (Yellowfever mosquito).